The sequence spans 299 residues: Ribosomal RNA small subunit methyltransferase H 1 (299 aa).

S-adenosyl-L-methionine is bound by residues 31–33 (GGH), Asp-50, Phe-76, Asp-97, and Gln-104.

This sequence belongs to the methyltransferase superfamily. RsmH family.

The protein localises to the cytoplasm. The enzyme catalyses cytidine(1402) in 16S rRNA + S-adenosyl-L-methionine = N(4)-methylcytidine(1402) in 16S rRNA + S-adenosyl-L-homocysteine + H(+). In terms of biological role, specifically methylates the N4 position of cytidine in position 1402 (C1402) of 16S rRNA. The polypeptide is Ribosomal RNA small subunit methyltransferase H 1 (Acholeplasma laidlawii (strain PG-8A)).